Here is a 106-residue protein sequence, read N- to C-terminus: CRISPR-associated endoribonuclease Cas2 (106 aa).

Aspartate 22 provides a ligand contact to Mg(2+).

This sequence belongs to the CRISPR-associated endoribonuclease Cas2 protein family. As to quaternary structure, homodimer, forms a heterotetramer with a Cas1 homodimer. It depends on Mg(2+) as a cofactor.

Functionally, CRISPR (clustered regularly interspaced short palindromic repeat), is an adaptive immune system that provides protection against mobile genetic elements (viruses, transposable elements and conjugative plasmids). CRISPR clusters contain sequences complementary to antecedent mobile elements and target invading nucleic acids. CRISPR clusters are transcribed and processed into CRISPR RNA (crRNA). Functions as a ssRNA-specific endoribonuclease. Involved in the integration of spacer DNA into the CRISPR cassette. This is CRISPR-associated endoribonuclease Cas2 from Fusobacterium nucleatum subsp. nucleatum (strain ATCC 25586 / DSM 15643 / BCRC 10681 / CIP 101130 / JCM 8532 / KCTC 2640 / LMG 13131 / VPI 4355).